We begin with the raw amino-acid sequence, 330 residues long: Copper-containing nitrite reductase (330 aa).

2 consecutive Plastocyanin-like domains span residues 1-165 (GLPR…YDRV) and 166-330 (YTIG…PGPA). Cu cation contacts are provided by histidine 85, histidine 90, histidine 125, cysteine 126, histidine 135, methionine 140, and histidine 296.

This sequence belongs to the multicopper oxidase family. As to quaternary structure, homotrimer. Cu(2+) serves as cofactor. It depends on Cu(+) as a cofactor. The cofactor is FAD.

The protein resides in the periplasm. The enzyme catalyses nitric oxide + Fe(III)-[cytochrome c] + H2O = Fe(II)-[cytochrome c] + nitrite + 2 H(+). It participates in nitrogen metabolism; nitrate reduction (denitrification); dinitrogen from nitrate: step 2/4. This chain is Copper-containing nitrite reductase (nirK), found in Alcaligenes xylosoxydans xylosoxydans (Achromobacter xylosoxidans).